The following is a 222-amino-acid chain: Probable elongation factor 1-beta (222 aa).

A disordered region spans residues 90-111 (KPAADDDDDVDLFGSDDEEDEE). Over residues 94–111 (DDDDDVDLFGSDDEEDEE) the composition is skewed to acidic residues. Ser104 is modified (phosphoserine).

This sequence belongs to the EF-1-beta/EF-1-delta family. As to quaternary structure, EF-1 is composed of 4 subunits: alpha, beta, beta' and gamma. In terms of processing, phosphorylation affects the GDP/GTP exchange rate.

In terms of biological role, EF-1-beta and EF-1-delta stimulate the exchange of GDP bound to EF-1-alpha to GTP. This Drosophila melanogaster (Fruit fly) protein is Probable elongation factor 1-beta.